Reading from the N-terminus, the 213-residue chain is ATP phosphoribosyltransferase (213 aa).

This sequence belongs to the ATP phosphoribosyltransferase family. Short subfamily. Heteromultimer composed of HisG and HisZ subunits.

Its subcellular location is the cytoplasm. It carries out the reaction 1-(5-phospho-beta-D-ribosyl)-ATP + diphosphate = 5-phospho-alpha-D-ribose 1-diphosphate + ATP. Its pathway is amino-acid biosynthesis; L-histidine biosynthesis; L-histidine from 5-phospho-alpha-D-ribose 1-diphosphate: step 1/9. Functionally, catalyzes the condensation of ATP and 5-phosphoribose 1-diphosphate to form N'-(5'-phosphoribosyl)-ATP (PR-ATP). Has a crucial role in the pathway because the rate of histidine biosynthesis seems to be controlled primarily by regulation of HisG enzymatic activity. This Bacillus subtilis (strain 168) protein is ATP phosphoribosyltransferase (hisG).